The primary structure comprises 503 residues: MRKLNPALEFRDFIQVLKDEDDLIEITEEIDPNLEVGAIMRKAYESHLPAPLFKNLKGASKDLFSILGCPAGLRSKEKGDHGRIAHHLGLDPKTTIKEIIDYLLECKEKEPLPPITVPVSSAPCKTHILSEEKIHLQSLPTPYLHVSDGGKYLQTYGMWILQTPDKKWTNWSIARGMVVDDKHITGLVIKPQHIRQIADSWAAIGKANEIPFALCFGVPPAAILVSSMPIPEGVSESDYVGAILGESVPVVKCETNDLMVPATSEMVFEGTLSLTDTHLEGPFGEMHGYVFKSQGHPCPLYTVKAMSYRDNAILPVSNPGLCTDETHTLIGSLVATEAKELAIESGLPILDAFMPYEAQALWLILKVDLKGLQALKTTPEEFCKKVGDIYFRTKVGFIVHEIILVADDIDIFNFKEVIWAYVTRHTPVADQMAFDDVTSFPLAPFVSQSSRSKTMKGGKCVTNCIFRQQYERSFDYITCNFEKGYPKGLVDKVNENWKRYGYK.

Positions 170, 193, and 236 each coordinate Mn(2+). Residues Asn170–Arg175, Gln192–His193, and Glu236 contribute to the prenylated FMN site. Glu285 serves as the catalytic Proton donor. Lys394 serves as a coordination point for prenylated FMN.

The protein belongs to the UbiD family. UbiD-like/FDC subfamily. As to quaternary structure, homodimer. May form higher order oligomers. Mn(2+) is required as a cofactor. The cofactor is prenylated FMN.

It localises to the cytoplasm. The catalysed reaction is (E)-4-coumarate + H(+) = 4-vinylphenol + CO2. It catalyses the reaction (E)-cinnamate + H(+) = styrene + CO2. The enzyme catalyses (E)-ferulate + H(+) = 2-methoxy-4-vinylphenol + CO2. Functionally, catalyzes the reversible decarboxylation of aromatic carboxylic acids like ferulic acid, p-coumaric acid or cinnamic acid, producing the corresponding vinyl derivatives 4-vinylphenol, 4-vinylguaiacol, and styrene, respectively, which play the role of aroma metabolites. Not essential for ubiquinone synthesis. In Saccharomyces cerevisiae (strain ATCC 204508 / S288c) (Baker's yeast), this protein is Ferulic acid decarboxylase 1.